Reading from the N-terminus, the 64-residue chain is MSCLPVFVILLLLTASGPSVDARLKTKDDVPLSSFRDNAKSTLRRLQDKSACCGYKLCSPCGQA.

Residues Met1 to Ala22 form the signal peptide. A propeptide spanning residues Arg23–Lys49 is cleaved from the precursor. Pro60 carries the post-translational modification 4-hydroxyproline; partial; in major form.

Belongs to the conotoxin T superfamily. Contains 2 disulfide bonds. As to expression, expressed by the venom duct.

It localises to the secreted. In terms of biological role, probable toxin that inhibits ion channels. In Conus amadis (Amadis cone), this protein is Conotoxin Am1.1.